The sequence spans 585 residues: Bifunctional purine biosynthesis protein ade10 (585 aa).

Residues 1–142 (MYALLSVYDK…KNHARVTILS (142 aa)) enclose the MGS-like domain. Residues 30 to 33 (SGGT), 60 to 63 (RVKT), 97 to 98 (CN), and 121 to 122 (DI) each bind IMP. The active-site Proton donor/acceptor; for FAICAR cyclization activity is Lys133. Residues 200-201 (RY), His260, Gly308, Asp331, Asn423, and Arg443 each bind 5-amino-1-(5-phospho-beta-D-ribosyl)imidazole-4-carboxamide. Residue His260 is the Proton acceptor; for AICAR formyltransferase activity of the active site. Ile444 lines the (6R)-10-formyltetrahydrofolate pocket. Phe534 contacts 5-amino-1-(5-phospho-beta-D-ribosyl)imidazole-4-carboxamide. (6R)-10-formyltetrahydrofolate-binding positions include Asp539 and 558–559 (SV). Position 581 (Arg581) interacts with 5-amino-1-(5-phospho-beta-D-ribosyl)imidazole-4-carboxamide.

It belongs to the PurH family. Homodimer.

It localises to the cytoplasm. The protein localises to the cytosol. It catalyses the reaction (6R)-10-formyltetrahydrofolate + 5-amino-1-(5-phospho-beta-D-ribosyl)imidazole-4-carboxamide = 5-formamido-1-(5-phospho-D-ribosyl)imidazole-4-carboxamide + (6S)-5,6,7,8-tetrahydrofolate. The catalysed reaction is IMP + H2O = 5-formamido-1-(5-phospho-D-ribosyl)imidazole-4-carboxamide. Its pathway is purine metabolism; IMP biosynthesis via de novo pathway; 5-formamido-1-(5-phospho-D-ribosyl)imidazole-4-carboxamide from 5-amino-1-(5-phospho-D-ribosyl)imidazole-4-carboxamide (10-formyl THF route): step 1/1. The protein operates within purine metabolism; IMP biosynthesis via de novo pathway; IMP from 5-formamido-1-(5-phospho-D-ribosyl)imidazole-4-carboxamide: step 1/1. Its function is as follows. Bifunctional enzyme that catalyzes the last two steps of purine biosynthesis. Acts as a transformylase that incorporates a formyl group to the AMP analog AICAR (5-amino-1-(5-phospho-beta-D-ribosyl)imidazole-4-carboxamide) to produce the intermediate formyl-AICAR (FAICAR). Also catalyzes the cyclization of FAICAR to IMP. In Schizosaccharomyces pombe (strain 972 / ATCC 24843) (Fission yeast), this protein is Bifunctional purine biosynthesis protein ade10 (ade10).